Here is a 292-residue protein sequence, read N- to C-terminus: Diaminopimelate epimerase (292 aa).

Positions 13, 46, and 66 each coordinate substrate. C75 serves as the catalytic Proton donor. Substrate is bound by residues 76–77, N170, N203, and 221–222; these read GN and ER. C230 functions as the Proton acceptor in the catalytic mechanism. 231–232 is a binding site for substrate; sequence GT.

The protein belongs to the diaminopimelate epimerase family. In terms of assembly, homodimer.

It localises to the cytoplasm. It carries out the reaction (2S,6S)-2,6-diaminopimelate = meso-2,6-diaminopimelate. Its pathway is amino-acid biosynthesis; L-lysine biosynthesis via DAP pathway; DL-2,6-diaminopimelate from LL-2,6-diaminopimelate: step 1/1. Functionally, catalyzes the stereoinversion of LL-2,6-diaminopimelate (L,L-DAP) to meso-diaminopimelate (meso-DAP), a precursor of L-lysine and an essential component of the bacterial peptidoglycan. This is Diaminopimelate epimerase from Acidovorax ebreus (strain TPSY) (Diaphorobacter sp. (strain TPSY)).